Here is a 139-residue protein sequence, read N- to C-terminus: MPPMKAVLQLSIHEERIRKKAFVTVSRCPGVTSITMDDKTGKMTVVGEVDVPVIVMKLRKLCNTELVSVEVVKPPEKKPEPEKPAPPKPAPAPAKPAEIVAWPVQMNNPYQYNPAYANSYYQPYGNSRFVTDESNCVIM.

One can recognise an HMA domain in the interval 3 to 70 (PMKAVLQLSI…LCNTELVSVE (68 aa)). Residues 70–94 (EVVKPPEKKPEPEKPAPPKPAPAPA) form a disordered region. Positions 73–85 (KPPEKKPEPEKPA) are enriched in basic and acidic residues. Cys-136 carries the cysteine methyl ester modification. Cys-136 is lipidated: S-farnesyl cysteine. Residues 137 to 139 (VIM) constitute a propeptide, removed in mature form.

Belongs to the HIPP family.

Probable heavy-metal-binding protein. This is Heavy metal-associated isoprenylated plant protein 13 from Arabidopsis thaliana (Mouse-ear cress).